Here is a 190-residue protein sequence, read N- to C-terminus: Small ribosomal subunit protein eS7B (190 aa).

Serine 2 carries the N-acetylserine modification. Serine 10 and serine 31 each carry phosphoserine. Glycyl lysine isopeptide (Lys-Gly) (interchain with G-Cter in ubiquitin) cross-links involve residues lysine 83 and lysine 84.

Belongs to the eukaryotic ribosomal protein eS7 family. As to quaternary structure, component of the small ribosomal subunit (SSU). Mature yeast ribosomes consist of a small (40S) and a large (60S) subunit. The 40S small subunit contains 1 molecule of ribosomal RNA (18S rRNA) and 33 different proteins (encoded by 57 genes). The large 60S subunit contains 3 rRNA molecules (25S, 5.8S and 5S rRNA) and 46 different proteins (encoded by 81 genes). Interacts with snoRNA U3. uS11 interacts with MPP10. Component of the ribosomal small subunit (SSU) processome composed of at least 40 protein subunits and snoRNA U3. In terms of processing, N-terminally acetylated by acetyltransferase NatA. Ubiquitinated at Lys-83 and Lys-84 in response to stalled ribosomes, leading to activation of the No-Go Decay (NGD) pathway: first monoubiquitinated by MOT2/NOT4, followed by formation by HEL2 of 'Lys-63'-linked polyubiquitin chains on monoubiquitin.

It is found in the cytoplasm. Its subcellular location is the nucleus. The protein resides in the nucleolus. Component of the ribosome, a large ribonucleoprotein complex responsible for the synthesis of proteins in the cell. The small ribosomal subunit (SSU) binds messenger RNAs (mRNAs) and translates the encoded message by selecting cognate aminoacyl-transfer RNA (tRNA) molecules. The large subunit (LSU) contains the ribosomal catalytic site termed the peptidyl transferase center (PTC), which catalyzes the formation of peptide bonds, thereby polymerizing the amino acids delivered by tRNAs into a polypeptide chain. The nascent polypeptides leave the ribosome through a tunnel in the LSU and interact with protein factors that function in enzymatic processing, targeting, and the membrane insertion of nascent chains at the exit of the ribosomal tunnel. eS7 is involved in nucleolar processing of pre-18S ribosomal RNA and ribosome assembly. The chain is Small ribosomal subunit protein eS7B from Saccharomyces cerevisiae (strain ATCC 204508 / S288c) (Baker's yeast).